A 315-amino-acid polypeptide reads, in one-letter code: CRISPR-associated endonuclease Cas1 1 (315 aa).

Mn(2+) contacts are provided by Glu-144, His-208, and Glu-223.

The protein belongs to the CRISPR-associated endonuclease Cas1 family. As to quaternary structure, homodimer, forms a heterotetramer with a Cas2 homodimer. The cofactor is Mg(2+). Mn(2+) is required as a cofactor.

Its function is as follows. CRISPR (clustered regularly interspaced short palindromic repeat), is an adaptive immune system that provides protection against mobile genetic elements (viruses, transposable elements and conjugative plasmids). CRISPR clusters contain spacers, sequences complementary to antecedent mobile elements, and target invading nucleic acids. CRISPR clusters are transcribed and processed into CRISPR RNA (crRNA). Acts as a dsDNA endonuclease. Involved in the integration of spacer DNA into the CRISPR cassette. In Thermus thermophilus (strain ATCC 27634 / DSM 579 / HB8), this protein is CRISPR-associated endonuclease Cas1 1.